Reading from the N-terminus, the 389-residue chain is Phospho-N-acetylmuramoyl-pentapeptide-transferase (389 aa).

The next 10 helical transmembrane spans lie at 21–41 (FITFRAVFATLTALAIGLFFG), 70–90 (GTPTMGGALILLAIGVATLLW), 97–117 (FVWVVLIVTLGFGAVGWVDDY), 134–154 (YMWQSIIGLFAAVYLAFSVSA), 189–209 (TISYPLGVWGFIALTYFVIVG), 222–242 (GLAIMPTVMVGTALGLFAYLT), 259–279 (AGELIIFCGAMAGAGLAFLWF), 286–306 (VFMGDVGALALGGALGTIAVI), 311–331 (IVLFIMGGVFVVETLSVMIQV), and 366–386 (QVVVRFWIITMMLVLFGLSTL).

It belongs to the glycosyltransferase 4 family. MraY subfamily. Mg(2+) serves as cofactor.

The protein resides in the cell inner membrane. The catalysed reaction is UDP-N-acetyl-alpha-D-muramoyl-L-alanyl-gamma-D-glutamyl-meso-2,6-diaminopimeloyl-D-alanyl-D-alanine + di-trans,octa-cis-undecaprenyl phosphate = di-trans,octa-cis-undecaprenyl diphospho-N-acetyl-alpha-D-muramoyl-L-alanyl-D-glutamyl-meso-2,6-diaminopimeloyl-D-alanyl-D-alanine + UMP. The protein operates within cell wall biogenesis; peptidoglycan biosynthesis. In terms of biological role, catalyzes the initial step of the lipid cycle reactions in the biosynthesis of the cell wall peptidoglycan: transfers peptidoglycan precursor phospho-MurNAc-pentapeptide from UDP-MurNAc-pentapeptide onto the lipid carrier undecaprenyl phosphate, yielding undecaprenyl-pyrophosphoryl-MurNAc-pentapeptide, known as lipid I. This is Phospho-N-acetylmuramoyl-pentapeptide-transferase from Herminiimonas arsenicoxydans.